We begin with the raw amino-acid sequence, 395 residues long: Elongation factor Tu (395 aa).

The 195-residue stretch at 10 to 204 (KPHLNIGTIG…AVDTWIELPE (195 aa)) folds into the tr-type G domain. Positions 19–26 (GHVDHGKT) are G1. 19-26 (GHVDHGKT) contributes to the GTP binding site. T26 contacts Mg(2+). Positions 60–64 (GITIN) are G2. The interval 81 to 84 (DCPG) is G3. Residues 81–85 (DCPGH) and 136–139 (NKVD) contribute to the GTP site. The G4 stretch occupies residues 136–139 (NKVD). A G5 region spans residues 174-176 (SAL).

Belongs to the TRAFAC class translation factor GTPase superfamily. Classic translation factor GTPase family. EF-Tu/EF-1A subfamily. Monomer.

Its subcellular location is the cytoplasm. It catalyses the reaction GTP + H2O = GDP + phosphate + H(+). GTP hydrolase that promotes the GTP-dependent binding of aminoacyl-tRNA to the A-site of ribosomes during protein biosynthesis. This Christiangramia forsetii (strain DSM 17595 / CGMCC 1.15422 / KT0803) (Gramella forsetii) protein is Elongation factor Tu.